The following is a 471-amino-acid chain: Glutamate--tRNA ligase (471 aa).

The 'HIGH' region motif lies at 9-19 (PSPTGYLHVGG). The Zn(2+) site is built by Cys98, Cys100, Cys125, and His127. A 'KMSKS' region motif is present at residues 237–241 (KLSKR). An ATP-binding site is contributed by Lys240.

Belongs to the class-I aminoacyl-tRNA synthetase family. Glutamate--tRNA ligase type 1 subfamily. Monomer. Zn(2+) serves as cofactor.

The protein localises to the cytoplasm. It carries out the reaction tRNA(Glu) + L-glutamate + ATP = L-glutamyl-tRNA(Glu) + AMP + diphosphate. Functionally, catalyzes the attachment of glutamate to tRNA(Glu) in a two-step reaction: glutamate is first activated by ATP to form Glu-AMP and then transferred to the acceptor end of tRNA(Glu). This chain is Glutamate--tRNA ligase, found in Salmonella paratyphi A (strain ATCC 9150 / SARB42).